The following is a 306-amino-acid chain: Serrate RNA effector molecule homolog (306 aa).

The interval 1 to 28 is disordered; sequence HKEEELLGSSGGPPPEEPPKEGNPAEIN. The residue at position 101 (threonine 101) is a Phosphothreonine. The residue at position 109 (serine 109) is a Phosphoserine. The disordered stretch occupies residues 251-284; it reads GPPYPHGPYGAGRGNYDAFRGQGGYPGKPRNRMV. Residues arginine 263, arginine 270, and arginine 280 each carry the omega-N-methylarginine modification.

This sequence belongs to the ARS2 family. As to quaternary structure, interacts with CASP8AP2, ERBB4, NCBP1/CBP80 and DROSHA. Interacts with LUZP4. Interacts with NCBP2/CBP20 and NCBP3.

Its subcellular location is the nucleus. The protein localises to the nucleoplasm. It localises to the cytoplasm. In terms of biological role, acts as a mediator between the cap-binding complex (CBC) and the primary microRNAs (miRNAs) processing machinery during cell proliferation. Contributes to the stability and delivery of capped primary miRNA transcripts to the primary miRNA processing complex containing DGCR8 and DROSHA, thereby playing a role in RNA-mediated gene silencing (RNAi) by miRNAs. Binds capped RNAs (m7GpppG-capped RNA); however interaction is probably mediated via its interaction with NCBP1/CBP80 component of the CBC complex. Involved in cell cycle progression at S phase. Does not directly confer arsenite resistance but rather modulates arsenic sensitivity. Independently of its activity on miRNAs, necessary and sufficient to promote neural stem cell self-renewal. Does so by directly binding SOX2 promoter and positively regulating its transcription. This is Serrate RNA effector molecule homolog (SRRT) from Cricetulus griseus (Chinese hamster).